The sequence spans 417 residues: Histidinol-phosphate aminotransferase 1, chloroplastic (417 aa).

The N-terminal 40 residues, 1 to 40 (MGVINVQGSPSFSIHSSESNLRKSRALKKPFCSIRNRVYC), are a transit peptide targeting the chloroplast. Alanine 41 bears the N-acetylalanine mark. At lysine 277 the chain carries N6-(pyridoxal phosphate)lysine.

This sequence belongs to the class-II pyridoxal-phosphate-dependent aminotransferase family. Histidinol-phosphate aminotransferase subfamily. In terms of assembly, homodimer. Requires pyridoxal 5'-phosphate as cofactor. As to expression, expressed in both vegetative and reproductive tissues.

It is found in the plastid. Its subcellular location is the chloroplast. It carries out the reaction L-histidinol phosphate + 2-oxoglutarate = 3-(imidazol-4-yl)-2-oxopropyl phosphate + L-glutamate. It functions in the pathway amino-acid biosynthesis; L-histidine biosynthesis; L-histidine from 5-phospho-alpha-D-ribose 1-diphosphate: step 7/9. The sequence is that of Histidinol-phosphate aminotransferase 1, chloroplastic (HISN6A) from Arabidopsis thaliana (Mouse-ear cress).